A 238-amino-acid chain; its full sequence is MKSLFLSEKIYVLILAGGTGSRMGSKIPKQFLELNGEPILIHSLKRFQNWGKQKRIVLVSHFESIPKIESICASYLENEDRIVQGGENRHSSMLCGLSVLDFKDEDIILVHDAARPFVLADELDSLCEKVRSDGIATLASRTSETVLEELNGKTVSFLDREHVWFMKTPQGIRGDVLKELLTFSVDSIPTDLCSWALTFGKTSSIVESNPLNLKITRKEDLDLAEVFSSLFQKISSDI.

Belongs to the IspD/TarI cytidylyltransferase family. IspD subfamily.

It catalyses the reaction 2-C-methyl-D-erythritol 4-phosphate + CTP + H(+) = 4-CDP-2-C-methyl-D-erythritol + diphosphate. Its pathway is isoprenoid biosynthesis; isopentenyl diphosphate biosynthesis via DXP pathway; isopentenyl diphosphate from 1-deoxy-D-xylulose 5-phosphate: step 2/6. Its function is as follows. Catalyzes the formation of 4-diphosphocytidyl-2-C-methyl-D-erythritol from CTP and 2-C-methyl-D-erythritol 4-phosphate (MEP). The chain is 2-C-methyl-D-erythritol 4-phosphate cytidylyltransferase from Leptospira interrogans serogroup Icterohaemorrhagiae serovar copenhageni (strain Fiocruz L1-130).